A 57-amino-acid polypeptide reads, in one-letter code: uncharacterized protein (57 aa).

Its function is as follows. Proetin of unknown function whose overexpression causes growth inhibition. Overexpression increases the expression of ergosterol synthesis genes. This is an uncharacterized protein from Saccharomyces cerevisiae (strain ATCC 204508 / S288c) (Baker's yeast).